The primary structure comprises 558 residues: Dihydroxy-acid dehydratase (558 aa).

A [2Fe-2S] cluster-binding site is contributed by Cys-49. Position 81 (Asp-81) interacts with Mg(2+). A [2Fe-2S] cluster-binding site is contributed by Cys-122. Mg(2+)-binding residues include Asp-123 and Lys-124. Lys-124 is subject to N6-carboxylysine. Cys-194 is a binding site for [2Fe-2S] cluster. Residue Glu-446 participates in Mg(2+) binding. The active-site Proton acceptor is Ser-472.

This sequence belongs to the IlvD/Edd family. Homodimer. [2Fe-2S] cluster serves as cofactor. Mg(2+) is required as a cofactor.

The catalysed reaction is (2R)-2,3-dihydroxy-3-methylbutanoate = 3-methyl-2-oxobutanoate + H2O. It catalyses the reaction (2R,3R)-2,3-dihydroxy-3-methylpentanoate = (S)-3-methyl-2-oxopentanoate + H2O. It participates in amino-acid biosynthesis; L-isoleucine biosynthesis; L-isoleucine from 2-oxobutanoate: step 3/4. Its pathway is amino-acid biosynthesis; L-valine biosynthesis; L-valine from pyruvate: step 3/4. Functionally, functions in the biosynthesis of branched-chain amino acids. Catalyzes the dehydration of (2R,3R)-2,3-dihydroxy-3-methylpentanoate (2,3-dihydroxy-3-methylvalerate) into 2-oxo-3-methylpentanoate (2-oxo-3-methylvalerate) and of (2R)-2,3-dihydroxy-3-methylbutanoate (2,3-dihydroxyisovalerate) into 2-oxo-3-methylbutanoate (2-oxoisovalerate), the penultimate precursor to L-isoleucine and L-valine, respectively. The chain is Dihydroxy-acid dehydratase from Synechococcus sp. (strain RCC307).